The following is an 89-amino-acid chain: Small ribosomal subunit protein uS15 (89 aa).

This sequence belongs to the universal ribosomal protein uS15 family. Part of the 30S ribosomal subunit. Forms a bridge to the 50S subunit in the 70S ribosome, contacting the 23S rRNA.

Its function is as follows. One of the primary rRNA binding proteins, it binds directly to 16S rRNA where it helps nucleate assembly of the platform of the 30S subunit by binding and bridging several RNA helices of the 16S rRNA. In terms of biological role, forms an intersubunit bridge (bridge B4) with the 23S rRNA of the 50S subunit in the ribosome. This is Small ribosomal subunit protein uS15 from Paenarthrobacter aurescens (strain TC1).